The primary structure comprises 180 residues: Adenine phosphoribosyltransferase (180 aa).

The protein belongs to the purine/pyrimidine phosphoribosyltransferase family. Homodimer.

The protein localises to the cytoplasm. The enzyme catalyses AMP + diphosphate = 5-phospho-alpha-D-ribose 1-diphosphate + adenine. Its pathway is purine metabolism; AMP biosynthesis via salvage pathway; AMP from adenine: step 1/1. Catalyzes a salvage reaction resulting in the formation of AMP, that is energically less costly than de novo synthesis. The sequence is that of Adenine phosphoribosyltransferase from Haemophilus influenzae (strain PittEE).